Consider the following 344-residue polypeptide: tRNA dimethylallyltransferase (344 aa).

ATP is bound at residue 43–50 (GPTCCGKS). Residue 45-50 (TCCGKS) coordinates substrate. Residues 68 to 71 (DSMQ) are interaction with substrate tRNA.

It belongs to the IPP transferase family. In terms of assembly, monomer. Mg(2+) serves as cofactor.

It carries out the reaction adenosine(37) in tRNA + dimethylallyl diphosphate = N(6)-dimethylallyladenosine(37) in tRNA + diphosphate. Its function is as follows. Catalyzes the transfer of a dimethylallyl group onto the adenine at position 37 in tRNAs that read codons beginning with uridine, leading to the formation of N6-(dimethylallyl)adenosine (i(6)A). The chain is tRNA dimethylallyltransferase from Protochlamydia amoebophila (strain UWE25).